Reading from the N-terminus, the 282-residue chain is uncharacterized protein (282 aa).

It belongs to the ycf80 family.

It is found in the plastid. The protein localises to the chloroplast. This is an uncharacterized protein from Guillardia theta (Cryptophyte).